Reading from the N-terminus, the 199-residue chain is Recombination protein RecR (199 aa).

Residues 57–72 (CSQCHNITDTDPCQIC) form a C4-type zinc finger. The region spanning 80–176 (TTICVVQESR…KVTRLAHGLP (97 aa)) is the Toprim domain.

The protein belongs to the RecR family.

Functionally, may play a role in DNA repair. It seems to be involved in an RecBC-independent recombinational process of DNA repair. It may act with RecF and RecO. The sequence is that of Recombination protein RecR from Shouchella clausii (strain KSM-K16) (Alkalihalobacillus clausii).